We begin with the raw amino-acid sequence, 185 residues long: Probable chorismate pyruvate-lyase (185 aa).

Substrate contacts are provided by R84, L122, and E178.

Belongs to the UbiC family.

Its subcellular location is the cytoplasm. The catalysed reaction is chorismate = 4-hydroxybenzoate + pyruvate. It functions in the pathway cofactor biosynthesis; ubiquinone biosynthesis. Its function is as follows. Removes the pyruvyl group from chorismate, with concomitant aromatization of the ring, to provide 4-hydroxybenzoate (4HB) for the ubiquinone pathway. This chain is Probable chorismate pyruvate-lyase, found in Hydrogenovibrio crunogenus (strain DSM 25203 / XCL-2) (Thiomicrospira crunogena).